The primary structure comprises 1409 residues: Adhesion and penetration protein autotransporter (1409 aa).

Positions 1–25 (MKKTVFRLNFLTACVSLGIASQAWA) are cleaved as a signal peptide. The region spanning 26–294 (GHTYFGIDYQ…LIREEWFYNE (269 aa)) is the Peptidase S6 domain. Serine 250 is a catalytic residue. Disordered regions lie at residues 866 to 888 (YSAS…TPTS) and 1016 to 1078 (AKQV…SKRA). The span at 1057 to 1067 (VEQTTETQTSK) shows a compositional bias: polar residues. Basic residues predominate over residues 1068–1077 (PKTKKGRSKR). The Autotransporter domain maps to 1156–1409 (VDQAQSALWT…NVGVKLGYRW (254 aa)).

It is found in the periplasm. The protein localises to the secreted. Its subcellular location is the cell surface. It localises to the cell outer membrane. Functionally, probable protease; promotes adherence and invasion by directly binding to a host cell structure. The polypeptide is Adhesion and penetration protein autotransporter (hap) (Haemophilus influenzae (strain ATCC 51907 / DSM 11121 / KW20 / Rd)).